The primary structure comprises 415 residues: Gamma-glutamyl phosphate reductase (415 aa).

Belongs to the gamma-glutamyl phosphate reductase family.

The protein localises to the cytoplasm. The catalysed reaction is L-glutamate 5-semialdehyde + phosphate + NADP(+) = L-glutamyl 5-phosphate + NADPH + H(+). The protein operates within amino-acid biosynthesis; L-proline biosynthesis; L-glutamate 5-semialdehyde from L-glutamate: step 2/2. Catalyzes the NADPH-dependent reduction of L-glutamate 5-phosphate into L-glutamate 5-semialdehyde and phosphate. The product spontaneously undergoes cyclization to form 1-pyrroline-5-carboxylate. The chain is Gamma-glutamyl phosphate reductase from Listeria monocytogenes serotype 4b (strain F2365).